The primary structure comprises 513 residues: ATP synthase subunit beta (513 aa).

Residues 1–29 form a disordered region; the sequence is MATAPATEKKAPAKKAAAPKAAAPKKAAA. A compositionally biased stretch (low complexity) spans 14-29; the sequence is KKAAAPKAAAPKKAAA. Residue 186 to 193 participates in ATP binding; sequence GGAGVGKT.

Belongs to the ATPase alpha/beta chains family. As to quaternary structure, F-type ATPases have 2 components, CF(1) - the catalytic core - and CF(0) - the membrane proton channel. CF(1) has five subunits: alpha(3), beta(3), gamma(1), delta(1), epsilon(1). CF(0) has three main subunits: a(1), b(2) and c(9-12). The alpha and beta chains form an alternating ring which encloses part of the gamma chain. CF(1) is attached to CF(0) by a central stalk formed by the gamma and epsilon chains, while a peripheral stalk is formed by the delta and b chains.

The protein resides in the cell inner membrane. The enzyme catalyses ATP + H2O + 4 H(+)(in) = ADP + phosphate + 5 H(+)(out). Its function is as follows. Produces ATP from ADP in the presence of a proton gradient across the membrane. The catalytic sites are hosted primarily by the beta subunits. The polypeptide is ATP synthase subunit beta (Sphingopyxis alaskensis (strain DSM 13593 / LMG 18877 / RB2256) (Sphingomonas alaskensis)).